A 61-amino-acid polypeptide reads, in one-letter code: uncharacterized protein (61 aa).

This is an uncharacterized protein from Staphylococcus epidermidis.